A 241-amino-acid chain; its full sequence is MGSFPFLLPFAELEVGQHLYWQLGNIRIHGQVFMTSWLLIGALLTLVVVGTKKMERDPKGVQNLLEFLWDYIRDLARTQIGEKVYRDWMPFIGTLFLFIFVSNWGGALVPWRLIRLPSGELGAPTADINTTVALALLVSLSYFYAGLSNKGLRYFEYYVHPTPIMLPFKIVEDFTKPLSLSFRLFGNILADELVVAVLVFLVPLVLPVPVMFLGLFTSAIQALIFATLAAYYIGEAVEEHH.

5 helical membrane passes run 30 to 50 (GQVF…VVVG), 91 to 111 (FIGT…LVPW), 128 to 148 (INTT…AGLS), 193 to 213 (LVVA…VMFL), and 214 to 234 (GLFT…YYIG).

Belongs to the ATPase A chain family. As to quaternary structure, F-type ATPases have 2 components, CF(1) - the catalytic core - and CF(0) - the membrane proton channel. CF(1) has five subunits: alpha(3), beta(3), gamma(1), delta(1), epsilon(1). CF(0) has four main subunits: a, b, b' and c.

It localises to the cellular thylakoid membrane. In terms of biological role, key component of the proton channel; it plays a direct role in the translocation of protons across the membrane. The chain is ATP synthase subunit a from Prochlorococcus marinus (strain MIT 9211).